The chain runs to 183 residues: SsrA-binding protein (183 aa).

A disordered region spans residues 1 to 27 (MAKKATLVDHGAAKGKKKAQSKVSKKN). Positions 13 to 27 (AKGKKKAQSKVSKKN) are enriched in basic residues.

The protein belongs to the SmpB family.

Its subcellular location is the cytoplasm. Its function is as follows. Required for rescue of stalled ribosomes mediated by trans-translation. Binds to transfer-messenger RNA (tmRNA), required for stable association of tmRNA with ribosomes. tmRNA and SmpB together mimic tRNA shape, replacing the anticodon stem-loop with SmpB. tmRNA is encoded by the ssrA gene; the 2 termini fold to resemble tRNA(Ala) and it encodes a 'tag peptide', a short internal open reading frame. During trans-translation Ala-aminoacylated tmRNA acts like a tRNA, entering the A-site of stalled ribosomes, displacing the stalled mRNA. The ribosome then switches to translate the ORF on the tmRNA; the nascent peptide is terminated with the 'tag peptide' encoded by the tmRNA and targeted for degradation. The ribosome is freed to recommence translation, which seems to be the essential function of trans-translation. This chain is SsrA-binding protein, found in Corynebacterium kroppenstedtii (strain DSM 44385 / JCM 11950 / CIP 105744 / CCUG 35717).